Consider the following 216-residue polypeptide: Cytidylate kinase (216 aa).

Residue 7-15 (GPSGTGKST) participates in ATP binding.

It belongs to the cytidylate kinase family. Type 1 subfamily.

It localises to the cytoplasm. The enzyme catalyses CMP + ATP = CDP + ADP. It catalyses the reaction dCMP + ATP = dCDP + ADP. The polypeptide is Cytidylate kinase (Chlamydia trachomatis serovar D (strain ATCC VR-885 / DSM 19411 / UW-3/Cx)).